Here is a 149-residue protein sequence, read N- to C-terminus: Transcriptional repressor NrdR (149 aa).

The segment at 3 to 34 (CPFCSHQETQVVETRVSEDGDFIRRRRQCGAC) is a zinc-finger region. The ATP-cone domain maps to 49–139 (PTVVKKDGRR…VYRSFEDIDE (91 aa)).

Belongs to the NrdR family. Requires Zn(2+) as cofactor.

In terms of biological role, negatively regulates transcription of bacterial ribonucleotide reductase nrd genes and operons by binding to NrdR-boxes. This is Transcriptional repressor NrdR from Acidovorax sp. (strain JS42).